The following is a 105-amino-acid chain: Malonate decarboxylase acyl carrier protein (105 aa).

Ser28 bears the O-(phosphoribosyl dephospho-coenzyme A)serine mark.

The protein belongs to the MdcC family. Covalently binds the prosthetic group of malonate decarboxylase.

Its subcellular location is the cytoplasm. Functionally, subunit of malonate decarboxylase, it is an acyl carrier protein to which acetyl and malonyl thioester residues are bound via a 2'-(5''-phosphoribosyl)-3'-dephospho-CoA prosthetic group and turn over during the catalytic mechanism. The chain is Malonate decarboxylase acyl carrier protein from Xanthomonas campestris pv. campestris (strain 8004).